Consider the following 74-residue polypeptide: Translation initiation factor IF-1 (74 aa).

The region spanning 1–73 (MSNKEDIIKM…TKGRIVYRKK (73 aa)) is the S1-like domain.

This sequence belongs to the IF-1 family. In terms of assembly, component of the 30S ribosomal translation pre-initiation complex which assembles on the 30S ribosome in the order IF-2 and IF-3, IF-1 and N-formylmethionyl-tRNA(fMet); mRNA recruitment can occur at any time during PIC assembly.

Its subcellular location is the cytoplasm. One of the essential components for the initiation of protein synthesis. Stabilizes the binding of IF-2 and IF-3 on the 30S subunit to which N-formylmethionyl-tRNA(fMet) subsequently binds. Helps modulate mRNA selection, yielding the 30S pre-initiation complex (PIC). Upon addition of the 50S ribosomal subunit IF-1, IF-2 and IF-3 are released leaving the mature 70S translation initiation complex. This chain is Translation initiation factor IF-1, found in Thermosipho melanesiensis (strain DSM 12029 / CIP 104789 / BI429).